Consider the following 649-residue polypeptide: Extracellular metalloproteinase 4 (649 aa).

An N-terminal signal peptide occupies residues 1-18 (MHGLLLAGLLALPSNVLG). Positions 19–260 (HPAEPPNSVN…VHGVVDYVAS (242 aa)) are excised as a propeptide. H443 contacts Zn(2+). The active site involves E444. H447 contacts Zn(2+). N494 and N609 each carry an N-linked (GlcNAc...) asparagine glycan.

It belongs to the peptidase M36 family. It depends on Zn(2+) as a cofactor.

It localises to the secreted. Secreted metalloproteinase probably acting as a virulence factor. This chain is Extracellular metalloproteinase 4 (MEP4), found in Arthroderma otae (strain ATCC MYA-4605 / CBS 113480) (Microsporum canis).